The chain runs to 380 residues: Ribosomal RNA large subunit methyltransferase F (380 aa).

The interval 1–32 (MSHKTKPSTQERKAGKPSAPKRKVISKSPNSK) is disordered.

Belongs to the methyltransferase superfamily. METTL16/RlmF family.

It is found in the cytoplasm. The enzyme catalyses adenosine(1618) in 23S rRNA + S-adenosyl-L-methionine = N(6)-methyladenosine(1618) in 23S rRNA + S-adenosyl-L-homocysteine + H(+). Specifically methylates the adenine in position 1618 of 23S rRNA. The polypeptide is Ribosomal RNA large subunit methyltransferase F (Shewanella halifaxensis (strain HAW-EB4)).